The sequence spans 385 residues: MPDVIPADSVGIVTPQIAQFDTPLALSCGQSLSSYQLIYETYGTLNQSASNAILICHALSGDHHAAGYHAMSDSKPGWWDTAIGPGKAIDTNKFFVIALNNLGGCCGSTGPTSINPETGQRWEASFPIVTVEDWVESQARLADLLGIQTFAAIVGGSLGGMQVLEWSIRFPTRLQSAVIVASAPKLSTQNIAFNEVARQSIRRDPDFFDGNYIDNNSVPTNGLGLARMLGHITYLSDDAMGAKFGRQMRHDSYQYNYGIEFEVESYLRYQGEAFTKRFDANTYMLMTKALDYFDPASQTNGDLSAVLSRAQCEFLLVSFTTDWRFSPERSEEIVNALVKAGKSVSYAKIEATEGHDAFLFPIPRYMTVLNTFLTRVANRLTTEIK.

Residues 51 to 359 enclose the AB hydrolase-1 domain; sequence NAILICHALS…EATEGHDAFL (309 aa). Ser-157 (nucleophile) is an active-site residue. Arg-227 is a substrate binding site. Residues Asp-322 and His-355 contribute to the active site. Asp-356 provides a ligand contact to substrate.

It belongs to the AB hydrolase superfamily. MetX family. In terms of assembly, homodimer.

It localises to the cytoplasm. It catalyses the reaction L-homoserine + succinyl-CoA = O-succinyl-L-homoserine + CoA. Its pathway is amino-acid biosynthesis; L-methionine biosynthesis via de novo pathway; O-succinyl-L-homoserine from L-homoserine: step 1/1. Transfers a succinyl group from succinyl-CoA to L-homoserine, forming succinyl-L-homoserine. This is Homoserine O-succinyltransferase from Marinomonas sp. (strain MWYL1).